We begin with the raw amino-acid sequence, 392 residues long: Succinate--CoA ligase [ADP-forming] subunit beta (392 aa).

The ATP-grasp domain maps to 9–244; sequence KALLAQYGVG…LSEEESSEIE (236 aa). Residues lysine 46, 53-55, glutamate 99, leucine 102, and glutamate 107 contribute to the ATP site; that span reads GRG. Positions 199 and 213 each coordinate Mg(2+). Substrate is bound by residues asparagine 264 and 321–323; that span reads GIV.

It belongs to the succinate/malate CoA ligase beta subunit family. Heterotetramer of two alpha and two beta subunits. The cofactor is Mg(2+).

The enzyme catalyses succinate + ATP + CoA = succinyl-CoA + ADP + phosphate. The catalysed reaction is GTP + succinate + CoA = succinyl-CoA + GDP + phosphate. It participates in carbohydrate metabolism; tricarboxylic acid cycle; succinate from succinyl-CoA (ligase route): step 1/1. Succinyl-CoA synthetase functions in the citric acid cycle (TCA), coupling the hydrolysis of succinyl-CoA to the synthesis of either ATP or GTP and thus represents the only step of substrate-level phosphorylation in the TCA. The beta subunit provides nucleotide specificity of the enzyme and binds the substrate succinate, while the binding sites for coenzyme A and phosphate are found in the alpha subunit. The sequence is that of Succinate--CoA ligase [ADP-forming] subunit beta from Wolinella succinogenes (strain ATCC 29543 / DSM 1740 / CCUG 13145 / JCM 31913 / LMG 7466 / NCTC 11488 / FDC 602W) (Vibrio succinogenes).